Here is a 628-residue protein sequence, read N- to C-terminus: FAD-linked oxidoreductase hmp9 (628 aa).

A signal peptide spans 1–29; the sequence is MFCIIRAQLLLLLHLLVLALLLVGTVCNA. Positions 34-53 are disordered; sequence GHPSELEPLALKRGGSPRDD. Residues asparagine 80 and asparagine 133 are each glycosylated (N-linked (GlcNAc...) asparagine). One can recognise an FAD-binding PCMH-type domain in the interval 152-337; it reads LGQLPVYAID…LKTKIKAYPN (186 aa). An N-linked (GlcNAc...) asparagine glycan is attached at asparagine 356.

It belongs to the oxygen-dependent FAD-linked oxidoreductase family.

It functions in the pathway secondary metabolite biosynthesis. In terms of biological role, FAD-linked oxidoreductase; part of the gene cluster that mediates the biosynthesis of hypothemycin, a resorcylic acid lactone (RAL) that irreversibly inhibits a subset of protein kinases with a conserved cysteine in the ATP binding site such as human ERK2. The first step is performed by both PKSs hmp3 and hmp8 and leads to the production of 7',8'-dehydrozearalenol (DHZ). The highly reducing PKS hpm8 synthesizes the reduced hexaketide (7S,11S,2E,8E)-7,11-dihydroxy-dodeca-2,8-dienoate, which is transferred downstream to the non-reducing PKS hpm3. Hpm3 then extends the reduced hexaketide to a nonaketide, after which regioselective cyclization and macrolactonization affords DHZ. The next step is the conversion of DHZ into aigialomycin C and is performed by the O-methyltransferase hmp5, the FAD-binding monooxygenase hmp7, and the cytochrome P450 monooxygenase hmp1. The wide substrate tolerance of the hmp5 and hmp7 implies that the reactions from DHZ to aigialomycin C can occur in any order. The steps from aigialomycin C to hypothemycin are less well established. The FAD-linked oxidoreductase hmp9 presumably catalyzes oxidation of the C-6' hydroxyl to a ketone. The timing of this oxidation is important, since the resulting enone functional group is a Michael acceptor that can react spontaneously with glutathione, an abundant metabolite in fungal cells. The glutathione S-transferase hmp2 catalyzes cis-trans isomerization of the 7',8' double bond with equilibrium favoring the trans isomer. The hpm6-encoded transporter might preferentially pump hypothemycin out of the cell relative to the trans isomer aigialomycin A. The cis-to-trans isomerization may be coupled with C-4' hydroxylation, since all known hypothemycin analogs containing the enone functional group also have hydroxyl groups at both C-4' and C-5'. This chain is FAD-linked oxidoreductase hmp9, found in Hypomyces subiculosus (Nectria subiculosa).